The primary structure comprises 409 residues: Tryptophan synthase beta chain (409 aa).

K98 carries the post-translational modification N6-(pyridoxal phosphate)lysine.

Belongs to the TrpB family. Tetramer of two alpha and two beta chains. It depends on pyridoxal 5'-phosphate as a cofactor.

The catalysed reaction is (1S,2R)-1-C-(indol-3-yl)glycerol 3-phosphate + L-serine = D-glyceraldehyde 3-phosphate + L-tryptophan + H2O. It participates in amino-acid biosynthesis; L-tryptophan biosynthesis; L-tryptophan from chorismate: step 5/5. Functionally, the beta subunit is responsible for the synthesis of L-tryptophan from indole and L-serine. The protein is Tryptophan synthase beta chain (trpB) of Cereibacter sphaeroides (strain ATCC 17023 / DSM 158 / JCM 6121 / CCUG 31486 / LMG 2827 / NBRC 12203 / NCIMB 8253 / ATH 2.4.1.) (Rhodobacter sphaeroides).